The primary structure comprises 183 residues: V-type ATP synthase subunit E (183 aa).

It belongs to the V-ATPase E subunit family.

In terms of biological role, produces ATP from ADP in the presence of a proton gradient across the membrane. This is V-type ATP synthase subunit E from Fusobacterium nucleatum subsp. nucleatum (strain ATCC 25586 / DSM 15643 / BCRC 10681 / CIP 101130 / JCM 8532 / KCTC 2640 / LMG 13131 / VPI 4355).